A 245-amino-acid polypeptide reads, in one-letter code: Cysteine-rich secretory protein 3 (245 aa).

The first 22 residues, 1–22 (MALLPVLLFLAAVLLPFFPASG), serve as a signal peptide directing secretion. Residues 42–171 (VNKHNDLRRT…TLKYYYVCQY (130 aa)) enclose the SCP domain. Intrachain disulfides connect Cys191-Cys198, Cys194-Cys203, Cys207-Cys240, Cys216-Cys234, and Cys225-Cys238. Positions 207 to 240 (CEYEDLVSNCDSLKKIAGCEHELLKENCKTTCQC) constitute a ShKT domain.

This sequence belongs to the CRISP family. In terms of assembly, interacts with A1BG. Expressed in the salivary gland, in the ampulla and the seminal vesicle.

The protein resides in the secreted. The protein is Cysteine-rich secretory protein 3 (CRISP3) of Equus caballus (Horse).